Here is an 878-residue protein sequence, read N- to C-terminus: Pyruvate dehydrogenase phosphatase regulatory subunit, mitochondrial (878 aa).

Residues 1–93 (MLYRLLSIVQ…CAGILSTARH (93 aa)) constitute a mitochondrion transit peptide.

The protein belongs to the GcvT family. In terms of assembly, heterodimer of a catalytic (PDP1) and a regulatory (PDPR) subunit.

The protein resides in the mitochondrion matrix. In terms of biological role, decreases the sensitivity of PDP1 to magnesium ions, and this inhibition is reversed by the polyamine spermine. The polypeptide is Pyruvate dehydrogenase phosphatase regulatory subunit, mitochondrial (Pdpr) (Mus musculus (Mouse)).